The sequence spans 156 residues: MAGWTYPKLDIDENKLAKAVIKNVPASIRDLYNVCKAIRGMKLNDAKQFLNNVLEEKEALPFWKHSHGASHRSNISPKWKVKSGRYPKKAIKYVLKVLENAENNANSKGLDLENVKIVHIAAHKGIILKRYMPRAFGRSTRKYRYTSHIEVILGEV.

It belongs to the universal ribosomal protein uL22 family. As to quaternary structure, part of the 50S ribosomal subunit.

Functionally, this protein binds specifically to 23S rRNA. It makes multiple contacts with different domains of the 23S rRNA in the assembled 50S subunit and ribosome. The globular domain of the protein is located near the polypeptide exit tunnel on the outside of the subunit, while an extended beta-hairpin is found that lines the wall of the exit tunnel in the center of the 70S ribosome. This is Large ribosomal subunit protein uL22 from Sulfurisphaera tokodaii (strain DSM 16993 / JCM 10545 / NBRC 100140 / 7) (Sulfolobus tokodaii).